A 118-amino-acid chain; its full sequence is Small ribosomal subunit protein uS13 (118 aa).

Residues 94–118 (SLPVRGQRTKTNARTRKGPRKPIKK) are disordered.

It belongs to the universal ribosomal protein uS13 family. Part of the 30S ribosomal subunit. Forms a loose heterodimer with protein S19. Forms two bridges to the 50S subunit in the 70S ribosome.

Functionally, located at the top of the head of the 30S subunit, it contacts several helices of the 16S rRNA. In the 70S ribosome it contacts the 23S rRNA (bridge B1a) and protein L5 of the 50S subunit (bridge B1b), connecting the 2 subunits; these bridges are implicated in subunit movement. Contacts the tRNAs in the A and P-sites. The protein is Small ribosomal subunit protein uS13 of Haemophilus influenzae (strain 86-028NP).